A 245-amino-acid polypeptide reads, in one-letter code: MIIPALDLIDGTVVRLHQGDYGKQRDYGNDPLPRLQDYATQGAEVLHLVDLTGAKDPAKRQIPLIKTLVAGVNVPVQVGGGVRSEEDVAALLEAGVARVVVGSTAVKSPEMVKGWFERFGADALVLALDVRIDEQGNKQVAVSGWQENSGVSLEQLVETYLPIGLKHVLCTDISRDGTLAGSNVSLYEEVCARYPQVAFQSSGGIGDINDVAALRGTGVRGVIVGRALLEGKFTVKEAIACWQNA.

Residue Asp-7 is the Proton acceptor of the active site. Catalysis depends on Asp-129, which acts as the Proton donor.

This sequence belongs to the HisA/HisF family.

The protein localises to the cytoplasm. It catalyses the reaction 1-(5-phospho-beta-D-ribosyl)-5-[(5-phospho-beta-D-ribosylamino)methylideneamino]imidazole-4-carboxamide = 5-[(5-phospho-1-deoxy-D-ribulos-1-ylimino)methylamino]-1-(5-phospho-beta-D-ribosyl)imidazole-4-carboxamide. The protein operates within amino-acid biosynthesis; L-histidine biosynthesis; L-histidine from 5-phospho-alpha-D-ribose 1-diphosphate: step 4/9. In Shigella boydii serotype 4 (strain Sb227), this protein is 1-(5-phosphoribosyl)-5-[(5-phosphoribosylamino)methylideneamino] imidazole-4-carboxamide isomerase.